We begin with the raw amino-acid sequence, 363 residues long: Peroxisomal (S)-2-hydroxyacid oxidase GLO4 (363 aa).

The FMN hydroxy acid dehydrogenase domain occupies 1–357 (MDQIVNVDEF…TRNHVRTENE (357 aa)). Residues 78–80 (PTA), S107, 128–130 (QIY), and T156 each bind FMN. Y130 serves as a coordination point for a 2-oxocarboxylate. Position 165 (R165) interacts with a 2-oxocarboxylate. FMN contacts are provided by K228 and S250. Catalysis depends on H252, which acts as the Proton acceptor. R255 serves as a coordination point for a 2-oxocarboxylate. FMN contacts are provided by residues 283–287 (DGGVR) and 306–307 (GR). Residues 361–363 (SML) carry the Microbody targeting signal motif.

Belongs to the FMN-dependent alpha-hydroxy acid dehydrogenase family. Homotetramer. FMN is required as a cofactor.

The protein resides in the peroxisome. The catalysed reaction is a (2S)-2-hydroxycarboxylate + O2 = a 2-oxocarboxylate + H2O2. The enzyme catalyses 2-hydroxydodecanoate + O2 = 2-oxododecanoate + H2O2. It carries out the reaction 2-hydroxyhexanoate + O2 = 2-oxohexanoate + H2O2. It catalyses the reaction 2-hydroxyoctanoate + O2 = 2-oxooctanoate + H2O2. The catalysed reaction is (S)-lactate + O2 = pyruvate + H2O2. The protein operates within lipid metabolism; fatty acid metabolism. In terms of biological role, oxidase that catalyzes the oxidation of a broad range of 2-hydroxyacids to the corresponding 2-oxoacids, with a reduction of O2 to H2O2. Displays the highest activity with the long-chain fatty acid 2-hydroxydodecanoate and has intermediate activity with 2-hydroxyhexanoate, 2-hydroxyoctanote, and the short-chain hydroxyacid (S)-lactate (L-lactate). With much lower activity, it can also use glycolate, leucic acid, valic acid, and isoleucic acid as substrates in vitro. Cannot use 2-hydroxyhexadecanoate or D-lactate as substrates. May be involved in a general medium- and long-chain fatty acid catabolic pathway such as alpha-oxidation. The polypeptide is Peroxisomal (S)-2-hydroxyacid oxidase GLO4 (GLO4) (Arabidopsis thaliana (Mouse-ear cress)).